The primary structure comprises 252 residues: Trans-aconitate 2-methyltransferase (252 aa).

Belongs to the methyltransferase superfamily. Tam family.

The protein resides in the cytoplasm. It catalyses the reaction trans-aconitate + S-adenosyl-L-methionine = (E)-3-(methoxycarbonyl)pent-2-enedioate + S-adenosyl-L-homocysteine. Its function is as follows. Catalyzes the S-adenosylmethionine monomethyl esterification of trans-aconitate. This chain is Trans-aconitate 2-methyltransferase, found in Escherichia coli O1:K1 / APEC.